The sequence spans 493 residues: D-glyceraldehyde dehydrogenase (NADP(+)) (493 aa).

NADP(+) is bound by residues 144 to 147 (TPWN), Arg-155, 170 to 174 (KPSSD), 202 to 208 (KGSEIGD), 223 to 246 (GSTSTGQRIMEKASKNMAKLILEL), Cys-279, and 379 to 381 (EIF). Positions 147 and 155 each coordinate substrate. The Proton acceptor role is filled by Glu-245. Cys-279 contributes to the substrate binding site. Cys-279 (proton donor) is an active-site residue.

The protein belongs to the aldehyde dehydrogenase family. Glyceraldehyde dehydrogenase subfamily. As to quaternary structure, homotetramer. Dimer of dimers.

It carries out the reaction D-glyceraldehyde + NADP(+) + H2O = (R)-glycerate + NADPH + 2 H(+). It participates in carbohydrate degradation; glycolysis. With respect to regulation, stable for 2 hours at 60 degrees Celsius but activity is decreased to less than 50 percent within 15 minutes at 70 degrees Celsius. NADP-dependent dehydrogenase of the nED (non-phosphorylated Entner-Doudoroff) pathway with highest activity towards glyceraldehydes (e.g. D,L-glyceraldehyde and D-glyceraldehyde), to a lesser extent towards D,L-glyceraldehyde-3-phosphate and glycolaldehyde, but no activity towards aliphatic or aromatic aldehydes. This Picrophilus torridus (strain ATCC 700027 / DSM 9790 / JCM 10055 / NBRC 100828 / KAW 2/3) protein is D-glyceraldehyde dehydrogenase (NADP(+)).